Here is a 379-residue protein sequence, read N- to C-terminus: Cytochrome b (379 aa).

The next 4 helical transmembrane spans lie at 34-54, 78-99, 114-134, and 179-199; these read FGSL…LLAM, WFIR…YLHI, WNTG…GYVL, and FFAL…VHLT. Heme b is bound by residues H84 and H98. 2 residues coordinate heme b: H183 and H197. H202 lines the a ubiquinone pocket. Transmembrane regions (helical) follow at residues 227-247, 289-309, 321-341, and 348-368; these read LKDI…AFFS, LGGV…PLLH, LSQL…WIGS, and FIII…VLFP.

The protein belongs to the cytochrome b family. As to quaternary structure, the cytochrome bc1 complex contains 11 subunits: 3 respiratory subunits (MT-CYB, CYC1 and UQCRFS1), 2 core proteins (UQCRC1 and UQCRC2) and 6 low-molecular weight proteins (UQCRH/QCR6, UQCRB/QCR7, UQCRQ/QCR8, UQCR10/QCR9, UQCR11/QCR10 and a cleavage product of UQCRFS1). This cytochrome bc1 complex then forms a dimer. Requires heme b as cofactor.

Its subcellular location is the mitochondrion inner membrane. Its function is as follows. Component of the ubiquinol-cytochrome c reductase complex (complex III or cytochrome b-c1 complex) that is part of the mitochondrial respiratory chain. The b-c1 complex mediates electron transfer from ubiquinol to cytochrome c. Contributes to the generation of a proton gradient across the mitochondrial membrane that is then used for ATP synthesis. The polypeptide is Cytochrome b (MT-CYB) (Struthio camelus (Common ostrich)).